The chain runs to 333 residues: Anthranilate phosphoribosyltransferase (333 aa).

5-phospho-alpha-D-ribose 1-diphosphate is bound by residues Gly80, 83–84 (GD), Thr88, 90–93 (NLST), 108–116 (KHGNRSASG), and Ser120. Anthranilate is bound at residue Gly80. Residue Ser92 participates in Mg(2+) binding. Asn111 provides a ligand contact to anthranilate. Arg166 contacts anthranilate. Mg(2+)-binding residues include Asp224 and Glu225.

The protein belongs to the anthranilate phosphoribosyltransferase family. Homodimer. Mg(2+) is required as a cofactor.

It catalyses the reaction N-(5-phospho-beta-D-ribosyl)anthranilate + diphosphate = 5-phospho-alpha-D-ribose 1-diphosphate + anthranilate. Its pathway is amino-acid biosynthesis; L-tryptophan biosynthesis; L-tryptophan from chorismate: step 2/5. Its function is as follows. Catalyzes the transfer of the phosphoribosyl group of 5-phosphorylribose-1-pyrophosphate (PRPP) to anthranilate to yield N-(5'-phosphoribosyl)-anthranilate (PRA). This is Anthranilate phosphoribosyltransferase from Pyrobaculum arsenaticum (strain DSM 13514 / JCM 11321 / PZ6).